The primary structure comprises 147 residues: Globin (147 aa).

In terms of domain architecture, Globin spans 1–147 (GLSAEQKTAL…LLGVLIENHQ (147 aa)). Residues H66 and H98 each coordinate heme b.

The protein belongs to the globin family. Homodimer.

The sequence is that of Globin from Tritia mutabilis (Sea snail).